We begin with the raw amino-acid sequence, 592 residues long: Ferric-chelate reductase 1 (592 aa).

The helical transmembrane segment at 2–22 (AAPQITLSVLVIALLTCSVTA) threads the bilayer. A Reelin domain is found at 13–179 (IALLTCSVTA…FTTPKATTQP (167 aa)). N85, N308, N321, and N353 each carry an N-linked (GlcNAc...) asparagine glycan. The 116-residue stretch at 216–331 (EPACVFLSFT…ESYYIFFAEG (116 aa)) folds into the DOMON domain. In terms of domain architecture, Cytochrome b561 spans 335-534 (DGRIFRHSQQ…IGTEVILEIH (200 aa)). Residues 372–392 (AHGALMFVAWMTTVSIGVLVA) form a helical membrane-spanning segment. Heme b-binding residues include H373 and H414. A run of 5 helical transmembrane segments spans residues 415 to 435 (RMLM…PFVY), 446 to 466 (HPYL…LATF), 477 to 499 (VFNW…AMFL), 515 to 535 (YAMM…EIHA), and 569 to 589 (VVLA…LSAI). Residues H446 and H482 each contribute to the heme b site.

The protein belongs to the FRRS1 family. Heme b is required as a cofactor. As to expression, expressed in spleen, liver and kidney with low expression in brain. Localizes in adult brain to the choroid plexus of the fourth, third, and lateral ventricles and to ependymal cells that line the ventricles.

The protein localises to the membrane. In terms of biological role, ferric-chelate reductases reduce Fe(3+) to Fe(2+) before its transport from the endosome to the cytoplasm. This Mus musculus (Mouse) protein is Ferric-chelate reductase 1 (FRRS1).